Consider the following 126-residue polypeptide: LWamide neuropeptides (126 aa).

The propeptide at 1–2 (KR) is 1. Residues 1–126 (KRQQPGLWGR…KSAIPKAKPQ (126 aa)) are disordered. Position 8 is a tryptophan amide (tryptophan 8). Residues 11-15 (SADPQ) constitute a propeptide, 2. Tryptophan 20 and tryptophan 29 each carry tryptophan amide. Positions 32–36 (SADPQ) are cleaved as a propeptide — 2. A tryptophan amide mark is found at tryptophan 41 and tryptophan 50. The propeptide at 53–57 (SADPQ) is 2. Residues tryptophan 62 and tryptophan 71 each carry the tryptophan amide modification. Positions 74–78 (SADPQ) are cleaved as a propeptide — 2. Tryptophan 83 is modified (tryptophan amide). The propeptide at 86-93 (SAGSGKRQ) is 3. At tryptophan 99 the chain carries Tryptophan amide. Positions 102-126 (SAEPPQYKELEDLKQKSAIPKAKPQ) are cleaved as a propeptide — 4. Positions 107-116 (QYKELEDLKQ) are enriched in basic and acidic residues.

This sequence belongs to the LWamide neuropeptide family.

The protein localises to the secreted. Its function is as follows. Metamorphosin A may be part of an internal signaling system involved in control of metamorphosis. The chain is LWamide neuropeptides from Anemonia sulcata (Mediterranean snakelocks sea anemone).